The primary structure comprises 396 residues: Pre-mRNA-splicing regulator WTAP (396 aa).

An N-acetylmethionine modification is found at M1. Phosphoserine is present on S14. Low complexity-rich tracts occupy residues 240–257 (QQQQ…TTSS) and 278–291 (SNGS…SGSG). The segment at 240–396 (QQQQSQASAP…SSVNVQGAVL (157 aa)) is disordered. A phosphoserine mark is found at S297, S305, S306, and S341. The span at 305–316 (SSSGNGNKASNS) shows a compositional bias: low complexity. Polar residues predominate over residues 340-351 (DSPTGSENSLTH). Position 350 is a phosphothreonine (T350). The segment covering 352–368 (HSNDTDSSHDPQEEKAV) has biased composition (basic and acidic residues). A compositionally biased stretch (polar residues) spans 380–396 (HVQNGLDSSVNVQGAVL). S388 bears the Phosphoserine mark.

Belongs to the fl(2)d family. As to quaternary structure, component of the WMM complex, a N6-methyltransferase complex composed of a catalytic subcomplex, named MAC, and of an associated subcomplex, named MACOM. The MAC subcomplex is composed of METTL3 and METTL14. The MACOM subcomplex is composed of WTAP, ZC3H13, CBLL1/HAKAI, VIRMA, and, in some cases of RBM15 (RBM15 or RBM15B). Interacts with WT1. Also a component of a MACOM-like complex, named WTAP complex, composed of WTAP, ZC3H13, CBLL1, VIRMA, RBM15, BCLAF1 and THRAP3. Interacts with CPNE4 (via VWFA domain).

Its subcellular location is the nucleus speckle. It is found in the nucleus. It localises to the nucleoplasm. The protein localises to the cytoplasm. In terms of biological role, associated component of the WMM complex, a complex that mediates N6-methyladenosine (m6A) methylation of RNAs, a modification that plays a role in the efficiency of mRNA splicing and RNA processing. Acts as a key regulator of m6A methylation by promoting m6A methylation of mRNAs at the 3'-UTR. Required for accumulation of METTL3 and METTL14 to nuclear speckle. Acts as a mRNA splicing regulator. Regulates G2/M cell-cycle transition by binding to the 3' UTR of CCNA2, which enhances its stability. Impairs WT1 DNA-binding ability and inhibits expression of WT1 target genes. This is Pre-mRNA-splicing regulator WTAP from Mus musculus (Mouse).